The following is a 497-amino-acid chain: Putative diacyglycerol O-acyltransferase Rv3480c (497 aa).

Histidine 143 (proton acceptor) is an active-site residue.

This sequence belongs to the long-chain O-acyltransferase family.

The enzyme catalyses an acyl-CoA + a 1,2-diacyl-sn-glycerol = a triacyl-sn-glycerol + CoA. It carries out the reaction di-(9Z)-octadecenoylglycerol + (9Z)-octadecenoyl-CoA = 1,2,3-tri-(9Z-octadecenoyl)-glycerol + CoA. The catalysed reaction is hexadecan-1-ol + hexadecanoyl-CoA = hexadecanyl hexadecanoate + CoA. It functions in the pathway glycerolipid metabolism; triacylglycerol biosynthesis. In terms of biological role, upon expression in E.coli has a weak triacylglycerol synthase function, making triacylglycerol (TG) from diolein and long-chain fatty acyl-CoA. Also functions weakly as a wax synthase, as it incorporates palmityl alcohol into wax esters in the presence of palmitoyl-CoA. This chain is Putative diacyglycerol O-acyltransferase Rv3480c, found in Mycobacterium tuberculosis (strain ATCC 25618 / H37Rv).